Reading from the N-terminus, the 169-residue chain is Allophycocyanin subunit beta-18 (169 aa).

The residue at position 72 (Asn72) is an N4-methylasparagine. Residue Cys82 coordinates (2R,3E)-phycocyanobilin.

Belongs to the phycobiliprotein family. Heterodimer of an alpha and a beta chain. Contains one covalently linked phycocyanobilin chromophore.

Its subcellular location is the plastid. It localises to the cyanelle thylakoid membrane. Light-harvesting photosynthetic bile pigment-protein from the phycobiliprotein complex. Allophycocyanin has a maximum absorption at approximately 650 nanometers. The protein is Allophycocyanin subunit beta-18 (apcF) of Cyanophora paradoxa.